Reading from the N-terminus, the 118-residue chain is Large ribosomal subunit protein bL19 (118 aa).

It belongs to the bacterial ribosomal protein bL19 family.

This protein is located at the 30S-50S ribosomal subunit interface and may play a role in the structure and function of the aminoacyl-tRNA binding site. This is Large ribosomal subunit protein bL19 from Helicobacter hepaticus (strain ATCC 51449 / 3B1).